The chain runs to 470 residues: mRNA export factor ICP27 homolog (470 aa).

2 disordered regions span residues 1-31 and 62-204; these read MALS…TGGD and VGDP…DRLN. The segment covering 71 to 85 has biased composition (polar residues); it reads VSFSASPQRAQPSNP. 2 stretches are compositionally biased toward basic residues: residues 94-107 and 178-187; these read HGRR…RRNN and RVHRNRRRGN. 4 residues coordinate Zn(2+): C359, H437, C441, and C446. The CHC2-type zinc finger occupies 359–446; it reads CYLSSSGSPT…HKRRCKADTC (88 aa).

Belongs to the HHV-1 ICP27 protein family. Homodimer. Homodimerization is required for transactivation. Associates in a complex with RNA, and host export factors NXF1/TAP and ALYREF; these interactions allow nuclear export of viral transcripts. Interacts with three host shuttling SR proteins SRSF1, SRSF3 and SRSF7. Interacts with host SRPK1. Interacts with IE62; this interaction enhances IE62 transactivation.

Its subcellular location is the host cytoplasm. It localises to the host nucleus. In terms of biological role, multifunctional regulator of the expression of viral genes that mediates nuclear export of viral intronless mRNAs. This immediate early (EI) protein promotes the nuclear export of viral intronless mRNAs by interacting with mRNAs and host NXF1/TAP. The protein is mRNA export factor ICP27 homolog of Equine herpesvirus 1 (strain Ab4p) (EHV-1).